A 129-amino-acid polypeptide reads, in one-letter code: Small ribosomal subunit protein uS8c (129 aa).

This sequence belongs to the universal ribosomal protein uS8 family. In terms of assembly, part of the 30S ribosomal subunit.

It localises to the plastid. Its subcellular location is the chloroplast. Its function is as follows. One of the primary rRNA binding proteins, it binds directly to 16S rRNA central domain where it helps coordinate assembly of the platform of the 30S subunit. The chain is Small ribosomal subunit protein uS8c (rps8) from Oltmannsiellopsis viridis (Marine flagellate).